The following is a 101-amino-acid chain: Small ribosomal subunit protein bS16 (101 aa).

Belongs to the bacterial ribosomal protein bS16 family.

This chain is Small ribosomal subunit protein bS16, found in Ureaplasma parvum serovar 3 (strain ATCC 700970).